A 671-amino-acid polypeptide reads, in one-letter code: Anaphase-promoting complex subunit cut9 (671 aa).

The interval 1 to 24 (MVVKRTQTDSRMQSTPGNHNHPDA) is disordered. TPR repeat units lie at residues 83-114 (REDYLRLWRHDALMQQQYKCAAFVGEKVLDIT), 117-142 (PNDAFWLAQVYCCTGDYARAKCLLTK), 150-173 (SACRYLAAFCLVKLYDWQGALNLL), 198-229 (LEASMCYLRGQVYTNLSNFDRAKECYKEALMV), 234-257 (YEAFDQLVSNHLLTADEEWDLVLK), 268-296 (AAFLRSLYMLKLNKTSHEDELRRAEDYLS), 306-334 (DLLLCKADTLFVRSRFIDVLAITTKILEI), 341-368 (VYPLHLASLHESGEKNKLYLISNDLVDR), 373-402 (AVTWLAVGIYYLCVNKISEARRYFSKSSTM), 407-435 (GPAWIGFAHSFAIEGEHDQAISAYTTAAR), 442-470 (LPYLFLGMQHMQLGNILLANEYLQSSYAL), 475-507 (PLLLNELGVVAFNKSDMQTAINHFQNALLLVKK), 513-545 (KPWAATWANLGHAYRKLKMYDAAIDALNQGLLL), and 550-579 (ANVHTAIALVYLHKKIPGLAITHLHESLAI). Residues 622-643 (NLNTSDKSMSMEDQSGKVTESV) form a disordered region.

As to quaternary structure, the APC/C is composed of at least 13 subunits: apc1, apc2, nuc2, apc4, apc5, cut9, apc8, apc10, apc11, hcn1, apc13, apc14 and apc15. Homodimer. Interacts directly with nuc2 and hcn1. Post-translationally, phosphorylated.

Its subcellular location is the nucleus. In terms of biological role, component of the anaphase-promoting complex/cyclosome (APC/C), a cell cycle-regulated E3 ubiquitin-protein ligase complex that controls progression through mitosis and the G1 phase of the cell cycle. The APC/C is thought to confer substrate specificity and, in the presence of ubiquitin-conjugating E2 enzymes, it catalyzes the formation of protein-ubiquitin conjugates that are subsequently degraded by the 26S proteasome. May play a pivotal role in the control of anaphase. The chain is Anaphase-promoting complex subunit cut9 (cut9) from Schizosaccharomyces pombe (strain 972 / ATCC 24843) (Fission yeast).